A 297-amino-acid chain; its full sequence is tRNA dimethylallyltransferase (297 aa).

15 to 22 (GPTASGKS) lines the ATP pocket. A substrate-binding site is contributed by 17–22 (TASGKS). Interaction with substrate tRNA stretches follow at residues 40–43 (DSMQ) and 164–168 (QRIVR).

Belongs to the IPP transferase family. Monomer. Mg(2+) is required as a cofactor.

The enzyme catalyses adenosine(37) in tRNA + dimethylallyl diphosphate = N(6)-dimethylallyladenosine(37) in tRNA + diphosphate. Its function is as follows. Catalyzes the transfer of a dimethylallyl group onto the adenine at position 37 in tRNAs that read codons beginning with uridine, leading to the formation of N6-(dimethylallyl)adenosine (i(6)A). This is tRNA dimethylallyltransferase from Rhizobium etli (strain CIAT 652).